Consider the following 535-residue polypeptide: uncharacterized protein (535 aa).

Residues 17-37 (IVLLCMIGFFCTTFMRIHFAL) form a helical membrane-spanning segment. 2 N-linked (GlcNAc...) asparagine glycosylation sites follow: Asn44 and Asn61. 6 helical membrane-spanning segments follow: residues 107–127 (LIFS…MFFI), 144–164 (ILVT…SVFL), 167–187 (IGMG…IGNW), 199–219 (IFTL…AAVC), 225–245 (WPAT…LWFF), and 292–312 (AFLG…LFQI). Asn329 is a glycosylation site (N-linked (GlcNAc...) asparagine). 5 helical membrane-spanning segments follow: residues 331 to 351 (TFTA…GIGI), 368 to 388 (VSHG…AFFV), 395 to 415 (TGLI…SGFY), 429 to 451 (MSAI…MSMF), and 463 to 483 (IFIG…LFGS).

This sequence belongs to the major facilitator superfamily. Sodium/anion cotransporter family.

Its subcellular location is the membrane. This is an uncharacterized protein from Caenorhabditis elegans.